Consider the following 434-residue polypeptide: Glutamyl-tRNA reductase (434 aa).

Substrate contacts are provided by residues 52–55 (TCNR), Ser-115, 120–122 (ETQ), and Gln-126. Residue Cys-53 is the Nucleophile of the active site. Position 195 to 200 (195 to 200 (GAGEMI)) interacts with NADP(+).

This sequence belongs to the glutamyl-tRNA reductase family. In terms of assembly, homodimer.

It catalyses the reaction (S)-4-amino-5-oxopentanoate + tRNA(Glu) + NADP(+) = L-glutamyl-tRNA(Glu) + NADPH + H(+). It functions in the pathway porphyrin-containing compound metabolism; protoporphyrin-IX biosynthesis; 5-aminolevulinate from L-glutamyl-tRNA(Glu): step 1/2. Catalyzes the NADPH-dependent reduction of glutamyl-tRNA(Glu) to glutamate 1-semialdehyde (GSA). The sequence is that of Glutamyl-tRNA reductase from Cupriavidus necator (strain ATCC 17699 / DSM 428 / KCTC 22496 / NCIMB 10442 / H16 / Stanier 337) (Ralstonia eutropha).